We begin with the raw amino-acid sequence, 380 residues long: Chaperone protein DnaJ (380 aa).

In terms of domain architecture, J spans 5–72 (DYYDTLGVPK…QKRAAYDQYG (68 aa)). The interval 21 to 47 (IKKAYRKLAMKHHPDRNQGDTSKVSED) is disordered. Residues 24–34 (AYRKLAMKHHP) show a composition bias toward basic residues. Positions 35–47 (DRNQGDTSKVSED) are enriched in basic and acidic residues. The CR-type zinc-finger motif lies at 139–217 (GKEAQIRIPS…CHGVGKTKNN (79 aa)). Positions 152, 155, 169, 172, 191, 194, 205, and 208 each coordinate Zn(2+). CXXCXGXG motif repeat units follow at residues 152–159 (CGICHGTG), 169–176 (CTTCHGHG), 191–198 (CPQCKGSG), and 205–212 (CVACHGVG).

This sequence belongs to the DnaJ family. In terms of assembly, homodimer. It depends on Zn(2+) as a cofactor.

Its subcellular location is the cytoplasm. In terms of biological role, participates actively in the response to hyperosmotic and heat shock by preventing the aggregation of stress-denatured proteins and by disaggregating proteins, also in an autonomous, DnaK-independent fashion. Unfolded proteins bind initially to DnaJ; upon interaction with the DnaJ-bound protein, DnaK hydrolyzes its bound ATP, resulting in the formation of a stable complex. GrpE releases ADP from DnaK; ATP binding to DnaK triggers the release of the substrate protein, thus completing the reaction cycle. Several rounds of ATP-dependent interactions between DnaJ, DnaK and GrpE are required for fully efficient folding. Also involved, together with DnaK and GrpE, in the DNA replication of plasmids through activation of initiation proteins. The protein is Chaperone protein DnaJ of Polaromonas naphthalenivorans (strain CJ2).